A 409-amino-acid polypeptide reads, in one-letter code: Peptidase T (409 aa).

His-78 is a binding site for Zn(2+). Residue Asp-80 is part of the active site. Asp-140 contacts Zn(2+). Glu-173 functions as the Proton acceptor in the catalytic mechanism. Residues Glu-174, Asp-196, and His-379 each coordinate Zn(2+).

The protein belongs to the peptidase M20B family. It depends on Zn(2+) as a cofactor.

It is found in the cytoplasm. The catalysed reaction is Release of the N-terminal residue from a tripeptide.. Cleaves the N-terminal amino acid of tripeptides. The chain is Peptidase T from Salmonella agona (strain SL483).